The sequence spans 675 residues: Protein C-mannosyl-transferase DPY19L1 (675 aa).

Residues 1–22 are disordered; it reads MEGRPPPEGRPPPRPRTGRAPR. The next 11 helical transmembrane spans lie at 66-88, 156-176, 186-208, 236-254, 260-279, 286-303, 309-325, 334-354, 414-434, 449-469, and 491-511; these read LYYS…WMIM, ACFY…LFFI, LGGL…VMWT, LYRG…FMLP, FVLL…GYID, IIYI…LMFG, TSYY…ILAM, VSEL…TVIL, VVLV…WGVL, GELV…ILIM, and LFGW…ILAA.

Belongs to the dpy-19 family. As to expression, widely expressed.

The protein localises to the endoplasmic reticulum membrane. The catalysed reaction is L-tryptophyl-[protein] + a di-trans,poly-cis-dolichyl beta-D-mannosyl phosphate = C-alpha-D-mannosyl-L-tryptophyl-[protein] + a di-trans,poly-cis-dolichyl phosphate + H(+). Its pathway is protein modification; protein glycosylation. Its function is as follows. C-mannosyltransferase that mediates the C-mannosylation tryptophan residues on target proteins. The reaction occurs on the luminal side of the endoplasmic reticulum and involves the transfer of a mannose unit from a dolichylphosphate mannose (Dol-P-Man) donor to an acceptor protein containing a WxxW consensus sequence. C-mannosylates the first two tryptophans in the WxxWxxWxxC motif in thrombospondin (TSP) type-1 of UNC5A. Regulates neurite extension during development. The chain is Protein C-mannosyl-transferase DPY19L1 (DPY19L1) from Homo sapiens (Human).